Reading from the N-terminus, the 299-residue chain is UDP-N-acetylenolpyruvoylglucosamine reductase (299 aa).

The 166-residue stretch at 27 to 192 (KSGGAADWLF…VGATFRGRPG (166 aa)) folds into the FAD-binding PCMH-type domain. Residue R172 is part of the active site. The interval 206–225 (ASREASQPLRSRTGGSTFKN) is disordered. Over residues 208 to 224 (REASQPLRSRTGGSTFK) the composition is skewed to polar residues. S221 (proton donor) is an active-site residue. E291 is a catalytic residue.

The protein belongs to the MurB family. It depends on FAD as a cofactor.

It localises to the cytoplasm. It carries out the reaction UDP-N-acetyl-alpha-D-muramate + NADP(+) = UDP-N-acetyl-3-O-(1-carboxyvinyl)-alpha-D-glucosamine + NADPH + H(+). Its pathway is cell wall biogenesis; peptidoglycan biosynthesis. Its function is as follows. Cell wall formation. This Sphingopyxis alaskensis (strain DSM 13593 / LMG 18877 / RB2256) (Sphingomonas alaskensis) protein is UDP-N-acetylenolpyruvoylglucosamine reductase.